The chain runs to 227 residues: ATP-dependent dethiobiotin synthetase BioD (227 aa).

Residue 13–18 (DIGKTY) coordinates ATP. Thr-17 is a binding site for Mg(2+). Residue Lys-38 is part of the active site. Ser-42 is a binding site for substrate. ATP-binding positions include Asp-55, 116 to 119 (EGSG), and 179 to 180 (NN). Asp-55 and Glu-116 together coordinate Mg(2+).

It belongs to the dethiobiotin synthetase family. As to quaternary structure, homodimer. It depends on Mg(2+) as a cofactor.

It localises to the cytoplasm. The catalysed reaction is (7R,8S)-7,8-diammoniononanoate + CO2 + ATP = (4R,5S)-dethiobiotin + ADP + phosphate + 3 H(+). Its pathway is cofactor biosynthesis; biotin biosynthesis; biotin from 7,8-diaminononanoate: step 1/2. Its function is as follows. Catalyzes a mechanistically unusual reaction, the ATP-dependent insertion of CO2 between the N7 and N8 nitrogen atoms of 7,8-diaminopelargonic acid (DAPA, also called 7,8-diammoniononanoate) to form a ureido ring. The chain is ATP-dependent dethiobiotin synthetase BioD from Clostridium botulinum (strain Loch Maree / Type A3).